Consider the following 216-residue polypeptide: Probable Golgi SNAP receptor complex member 2 (216 aa).

Residues 1–194 (MESLYHQTNN…IERRLVEDRR (194 aa)) are Cytoplasmic-facing. Positions 62 to 103 (QRQSSKLRVDQLKYDLRHLQTSLQTARERRQRRMQEISEREQ) form a coiled coil. The helical; Anchor for type IV membrane protein transmembrane segment at 195-215 (IFIGGVVVTLLIIALIIYFLV) threads the bilayer. Residue L216 is a topological domain, vesicular.

The protein belongs to the GOSR2 family. As to quaternary structure, part of a unique SNARE complex.

The protein localises to the golgi apparatus. It is found in the cis-Golgi network membrane. The protein resides in the golgi apparatus membrane. Its subcellular location is the endoplasmic reticulum membrane. Its function is as follows. Involved in transport of proteins from the cis/medial-Golgi to the trans-Golgi network. In Drosophila melanogaster (Fruit fly), this protein is Probable Golgi SNAP receptor complex member 2.